Consider the following 150-residue polypeptide: uncharacterized protein (150 aa).

Positions 1–39 (MKQRFSQVATVIFFVMSIRSPRNLGFFFTLALFVVLVCS) are cleaved as a signal peptide.

This is an uncharacterized protein from Saccharomyces cerevisiae (strain ATCC 204508 / S288c) (Baker's yeast).